The following is a 363-amino-acid chain: Cyanide hydratase (363 aa).

Positions Y6 to L285 constitute a CN hydrolase domain. The Proton acceptor role is filled by E46. K128 is an active-site residue. The active-site Nucleophile is the C163.

This sequence belongs to the carbon-nitrogen hydrolase superfamily. Nitrilase family. Oligomer of dimers, forming left-handed helical fibers.

It carries out the reaction formamide = hydrogen cyanide + H2O. Catalyzes the hydration of cyanide to formamide. Degradation of cyanide may be important for plant pathogenic fungi in infection of cyanogenic plants. The chain is Cyanide hydratase (CyhAB) from Alternaria brassicicola (Dark leaf spot agent).